Consider the following 338-residue polypeptide: Solute carrier family 35 member G4 (338 aa).

The disordered stretch occupies residues 1 to 29; the sequence is MAGSHPYFNLPDSTHPSPPSTPPSLHWHQ. Helical transmembrane passes span 37–57, 160–180, 190–210, 221–241, 250–270, 281–301, and 305–325; these read TNGL…VGPL, CGLL…LWTL, GLGY…LLVY, TVAF…LFVL, LLSW…FTCV, LVCA…YFML, and VAPS…IITA. The region spanning 49 to 174 is the EamA 1 domain; the sequence is LPAGFVGPLS…SILGLIIIVG (126 aa). Residues 272-325 enclose the EamA 2 domain; it reads YAVTKAHPALVCAVLHSEVVMALILQYFMLHETVAPSDIMGAGVVLGSIAIITA.

This sequence belongs to the SLC35G solute transporter family.

It localises to the membrane. This Homo sapiens (Human) protein is Solute carrier family 35 member G4 (SLC35G4).